We begin with the raw amino-acid sequence, 483 residues long: Glycogen synthase (483 aa).

Lysine 18 provides a ligand contact to ADP-alpha-D-glucose.

The protein belongs to the glycosyltransferase 1 family. Bacterial/plant glycogen synthase subfamily.

It catalyses the reaction [(1-&gt;4)-alpha-D-glucosyl](n) + ADP-alpha-D-glucose = [(1-&gt;4)-alpha-D-glucosyl](n+1) + ADP + H(+). It participates in glycan biosynthesis; glycogen biosynthesis. Functionally, synthesizes alpha-1,4-glucan chains using ADP-glucose. The polypeptide is Glycogen synthase (Rhodopseudomonas palustris (strain TIE-1)).